The chain runs to 193 residues: Superoxide dismutase [Fe] (193 aa).

Positions 27, 74, 157, and 161 each coordinate Fe cation.

The protein belongs to the iron/manganese superoxide dismutase family. In terms of assembly, homodimer. The cofactor is Fe cation.

The catalysed reaction is 2 superoxide + 2 H(+) = H2O2 + O2. Functionally, destroys superoxide anion radicals which are normally produced within the cells and which are toxic to biological systems. Partially complements double sodA-sodB deletions in E.coli. The protein is Superoxide dismutase [Fe] of Pseudomonas aeruginosa (strain ATCC 15692 / DSM 22644 / CIP 104116 / JCM 14847 / LMG 12228 / 1C / PRS 101 / PAO1).